The following is a 145-amino-acid chain: Large ribosomal subunit protein uL15 (145 aa).

The interval 1 to 54 is disordered; sequence MKLNELKYTPGSKKEATRVGRGMASGKGKTATRGHKGQNSRSGGGVRPGFEGGQ. Positions 42–52 are enriched in gly residues; it reads SGGGVRPGFEG.

The protein belongs to the universal ribosomal protein uL15 family. In terms of assembly, part of the 50S ribosomal subunit.

Its function is as follows. Binds to the 23S rRNA. The sequence is that of Large ribosomal subunit protein uL15 from Mycoplasma capricolum subsp. capricolum (strain California kid / ATCC 27343 / NCTC 10154).